We begin with the raw amino-acid sequence, 234 residues long: Probable transcriptional regulatory protein PFL_3960 (234 aa).

The protein belongs to the TACO1 family.

Its subcellular location is the cytoplasm. This is Probable transcriptional regulatory protein PFL_3960 from Pseudomonas fluorescens (strain ATCC BAA-477 / NRRL B-23932 / Pf-5).